Consider the following 192-residue polypeptide: Probable cobalt-precorrin-6B C(15)-methyltransferase (decarboxylating) (192 aa).

Residues Thr20, 44–48 (GSGTG), Glu68, and Ala96 each bind S-adenosyl-L-methionine.

The protein belongs to the methyltransferase superfamily. Archaeal-type CbiT family.

It carries out the reaction Co-precorrin-6B + S-adenosyl-L-methionine = Co-precorrin-7 + S-adenosyl-L-homocysteine + CO2. The protein operates within cofactor biosynthesis; adenosylcobalamin biosynthesis; cob(II)yrinate a,c-diamide from sirohydrochlorin (anaerobic route): step 8/10. Functionally, catalyzes the methylation of C-15 in cobalt-precorrin-6B followed by the decarboxylation of C-12 to form cobalt-precorrin-7. The protein is Probable cobalt-precorrin-6B C(15)-methyltransferase (decarboxylating) of Sulfolobus acidocaldarius (strain ATCC 33909 / DSM 639 / JCM 8929 / NBRC 15157 / NCIMB 11770).